Here is a 464-residue protein sequence, read N- to C-terminus: MVRTRFAPSPTGYMHLGNARTGIFSYLFARHHNGTFVLRIEDTDRERSTKEFEDSIIEDLKWLGIEWDEFYRQSERFDIYKEYAKKLIDSGHAYYCFCKEEDIEKQREEAYAQGKAYRYPGTCRHLSKEDVEDRLKSGESYVIRFKVPDGQIVSFEDMIRGNISINVDDFGDFVIVRSDGSSVYNFVAVIDDALMKITHVIRGEDHISNTPKQILIYEALGFKPPEFAHLPVILGEDRTKLSKRHGGVSVRFYKENGYCPEALFNYLCLLGWSSEKVGKEVISKEEAVKYFDIKDINLSPAVFSHDKLYWLNGVYIREILPEDRLLEDLLSFLEKAYGTVDIEYLKKIVKATRKEYNTYLEAVEKLRPFFKEKELDEVAKEELSKIDRKVFELLKQEIESLEEITPENLKGVVKNIQKSTSLKPKDVWHALRIALTGSLEGIAIDVIASILPKEEVLKRLSRYT.

Residues 8–18 (PSPTGYMHLGN) carry the 'HIGH' region motif. C96, C98, C123, and H125 together coordinate Zn(2+). A 'KMSKS' region motif is present at residues 240–244 (KLSKR). Residue K243 coordinates ATP.

It belongs to the class-I aminoacyl-tRNA synthetase family. Glutamate--tRNA ligase type 1 subfamily. Monomer. The cofactor is Zn(2+).

Its subcellular location is the cytoplasm. It carries out the reaction tRNA(Glu) + L-glutamate + ATP = L-glutamyl-tRNA(Glu) + AMP + diphosphate. Its function is as follows. Catalyzes the attachment of glutamate to tRNA(Glu) in a two-step reaction: glutamate is first activated by ATP to form Glu-AMP and then transferred to the acceptor end of tRNA(Glu). This is Glutamate--tRNA ligase from Hydrogenobaculum sp. (strain Y04AAS1).